Here is a 130-residue protein sequence, read N- to C-terminus: Small ribosomal subunit protein uS11 (130 aa).

The protein belongs to the universal ribosomal protein uS11 family. Part of the 30S ribosomal subunit. Interacts with proteins S7 and S18. Binds to IF-3.

Its function is as follows. Located on the platform of the 30S subunit, it bridges several disparate RNA helices of the 16S rRNA. Forms part of the Shine-Dalgarno cleft in the 70S ribosome. In Prochlorococcus marinus (strain MIT 9312), this protein is Small ribosomal subunit protein uS11.